Consider the following 711-residue polypeptide: Denticleless protein homolog B (711 aa).

WD repeat units lie at residues Gly47–Leu89, Ala96–Glu135, and Gly138–Phe178. The DDB1-binding motif motif lies at Trp168–Arg171. Residues Pro197–Lys204 carry the Nuclear localization signal motif. WD repeat units follow at residues Asp215–Arg254, Thr270–Val309, Gly314–Ile355, and Gly359–Ser398. Positions Trp244–Arg247 match the DDB1-binding motif motif. Disordered stretches follow at residues Gln473–Pro524 and Glu601–Ser698. Composition is skewed to polar residues over residues Thr504 to Pro516 and Leu606 to Pro627. Positions Met631–Ser642 are enriched in basic and acidic residues. The segment covering Asp658 to Ser675 has biased composition (low complexity). Polar residues predominate over residues Asn684–Gly697.

This sequence belongs to the WD repeat cdt2 family. Component of the DCX(DTL) E3 ubiquitin ligase complex, at least composed of cul4 (cul4a or cul4b), ddb1, dtl/cdt2 and rbx1.

It localises to the nucleus. The protein resides in the cytoplasm. The protein localises to the cytoskeleton. It is found in the microtubule organizing center. Its subcellular location is the centrosome. It localises to the chromosome. It functions in the pathway protein modification; protein ubiquitination. Functionally, substrate-specific adapter of a DCX (DDB1-CUL4-X-box) E3 ubiquitin-protein ligase complex required for cell cycle control, DNA damage response and translesion DNA synthesis. The DCX(DTL) complex, also named CRL4(CDT2) complex, mediates the polyubiquitination and subsequent degradation of CDT1, CDKN1A/p21(CIP1), KMT5A and SDE2. CDT1 degradation in response to DNA damage is necessary to ensure proper cell cycle regulation of DNA replication. CDKN1A/p21(CIP1) degradation during S phase or following UV irradiation is essential to control replication licensing. KMT5A degradation is also important for a proper regulation of mechanisms such as TGF-beta signaling, cell cycle progression, DNA repair and cell migration. Most substrates require their interaction with PCNA for their polyubiquitination: substrates interact with PCNA via their PIP-box, and those containing the 'K+4' motif in the PIP box, recruit the DCX(DTL) complex, leading to their degradation. In undamaged proliferating cells, the DCX(DTL) complex also promotes the 'Lys-164' monoubiquitination of PCNA, thereby being involved in PCNA-dependent translesion DNA synthesis. May play a role in the regulation of the circadian clock. In Xenopus laevis (African clawed frog), this protein is Denticleless protein homolog B (dtl-b).